The sequence spans 108 residues: Anthranilate 1,2-dioxygenase ferredoxin subunit (108 aa).

The Rieske domain occupies 9–105 (WHPLGAIDEF…IRIVDGQVEV (97 aa)). 4 residues coordinate [2Fe-2S] cluster: Cys-49, His-51, Cys-68, and His-71.

Belongs to the bacterial ring-hydroxylating dioxygenase ferredoxin component family. As to quaternary structure, part of a multicomponent enzyme system composed of a reductase (AndAa), a ferredoxin (AndAb) and a two-subunit oxygenase component (AndAc and AndAd). It depends on [2Fe-2S] cluster as a cofactor.

It participates in aromatic compound metabolism; anthranilate degradation via hydroxylation; catechol from anthranilate: step 1/1. Functionally, part of the multicomponent anthranilate dioxygenase, that converts anthranilate to catechol. This protein seems to be a 2Fe-2S ferredoxin. This is Anthranilate 1,2-dioxygenase ferredoxin subunit from Burkholderia cepacia (Pseudomonas cepacia).